Reading from the N-terminus, the 222-residue chain is Ribosomal RNA small subunit methyltransferase G (222 aa).

Residues Gly85, Leu90, 108–110, 136–137, and Arg150 each bind S-adenosyl-L-methionine; these read DAT and VE.

This sequence belongs to the methyltransferase superfamily. RNA methyltransferase RsmG family.

It localises to the cytoplasm. Its function is as follows. Specifically methylates the N7 position of a guanine in 16S rRNA. This Chlorobium phaeobacteroides (strain DSM 266 / SMG 266 / 2430) protein is Ribosomal RNA small subunit methyltransferase G.